The primary structure comprises 207 residues: Ribosomal RNA small subunit methyltransferase G (207 aa).

Residues G73, L78, 124-125 (VE), and R139 contribute to the S-adenosyl-L-methionine site.

The protein belongs to the methyltransferase superfamily. RNA methyltransferase RsmG family.

It is found in the cytoplasm. It catalyses the reaction guanosine(527) in 16S rRNA + S-adenosyl-L-methionine = N(7)-methylguanosine(527) in 16S rRNA + S-adenosyl-L-homocysteine. Functionally, specifically methylates the N7 position of guanine in position 527 of 16S rRNA. This chain is Ribosomal RNA small subunit methyltransferase G, found in Salmonella schwarzengrund (strain CVM19633).